The following is a 139-amino-acid chain: Plastocyanin (139 aa).

The signal sequence occupies residues 1-34 (MKLISASLRRFSLAVLTILLVVSSFAVFTPSASA). A Plastocyanin-like domain is found at 35–139 (ETYQVKLGTD…GMVGTITVQG (105 aa)). 4 residues coordinate Cu cation: His73, Cys123, His126, and Met131.

The protein belongs to the plastocyanin family. Cu(2+) serves as cofactor.

The protein localises to the cellular thylakoid membrane. Its function is as follows. Participates in electron transfer between P700 and the cytochrome b6-f complex in photosystem I. The polypeptide is Plastocyanin (Nostoc punctiforme (strain ATCC 29133 / PCC 73102)).